A 95-amino-acid chain; its full sequence is NELL2-interacting cell ontogeny regulator 1 (95 aa).

An N-terminal signal peptide occupies residues 1–34; that stretch reads MAPPPACRSPMSPPPPPLLLLLLSLALLGARARA.

Belongs to the NICOL family. As to quaternary structure, interacts with NELL2; triggers epididymal differentiation. Interacts with cell surface receptor TFRC; the interaction mediates uptake of NICOL1 into fibroblasts. Detected in the brain (at protein level). Also expressed at low levels in the kidney, primarily in tubular epithelial cells.

It is found in the secreted. Its subcellular location is the cytoplasm. It localises to the perinuclear region. In terms of biological role, mRNA-binding protein which interacts with a range of target mRNAs including SERPINE1, ACTA2, CCN2 and COL4A1 and may promote extracellular matrix production. Binds to the 3'-UTR of SERPINE1 mRNA and stabilizes the mRNA, possibly by competing for binding with SERBP1 and preventing SERBP1-mediated mRNA degradation. Also binds to the 3'-UTR of ACTA2. Testis-derived lumicrine factor that triggers epididymal differentiation and sperm maturation. The protein is NELL2-interacting cell ontogeny regulator 1 of Homo sapiens (Human).